A 570-amino-acid polypeptide reads, in one-letter code: Sulfite reductase [NADPH] hemoprotein beta-component (570 aa).

Positions 434, 440, 479, and 483 each coordinate [4Fe-4S] cluster. C483 contributes to the siroheme binding site.

The protein belongs to the nitrite and sulfite reductase 4Fe-4S domain family. Alpha(8)-beta(8). The alpha component is a flavoprotein, the beta component is a hemoprotein. It depends on siroheme as a cofactor. The cofactor is [4Fe-4S] cluster.

It catalyses the reaction hydrogen sulfide + 3 NADP(+) + 3 H2O = sulfite + 3 NADPH + 4 H(+). The protein operates within sulfur metabolism; hydrogen sulfide biosynthesis; hydrogen sulfide from sulfite (NADPH route): step 1/1. In terms of biological role, component of the sulfite reductase complex that catalyzes the 6-electron reduction of sulfite to sulfide. This is one of several activities required for the biosynthesis of L-cysteine from sulfate. This is Sulfite reductase [NADPH] hemoprotein beta-component from Escherichia fergusonii (strain ATCC 35469 / DSM 13698 / CCUG 18766 / IAM 14443 / JCM 21226 / LMG 7866 / NBRC 102419 / NCTC 12128 / CDC 0568-73).